A 250-amino-acid chain; its full sequence is Probable transcriptional regulatory protein ROP_68700 (250 aa).

This sequence belongs to the TACO1 family.

It is found in the cytoplasm. This Rhodococcus opacus (strain B4) protein is Probable transcriptional regulatory protein ROP_68700.